Reading from the N-terminus, the 1189-residue chain is Pesticidal crystal protein Cry1Ca (1189 aa).

The protein belongs to the delta endotoxin family.

In terms of biological role, promotes colloidosmotic lysis by binding to the midgut epithelial cells of many lepidopteran larvae including Spodoptera species. This is Pesticidal crystal protein Cry1Ca (cry1Ca) from Bacillus thuringiensis subsp. aizawai.